Reading from the N-terminus, the 121-residue chain is Flagellar protein FliT (121 aa).

Positions 1–50 (MNHAPHLYFAWQQLVEKSQLMLRLATEEQWDELIASEMAYVNAVQEIAHL) are required for homodimerization. A fliD binding region spans residues 60–98 (MQEQLRPMLRLILDNESKVKQLLQIRMDELAKLVGQSSV).

This sequence belongs to the FliT family. As to quaternary structure, homodimer. Interacts with FliD and FlhC.

Its subcellular location is the cytoplasm. It is found in the cytosol. Its function is as follows. Dual-function protein that regulates the transcription of class 2 flagellar operons and that also acts as an export chaperone for the filament-capping protein FliD. As a transcriptional regulator, acts as an anti-FlhDC factor; it directly binds FlhC, thus inhibiting the binding of the FlhC/FlhD complex to class 2 promoters, resulting in decreased expression of class 2 flagellar operons. As a chaperone, effects FliD transition to the membrane by preventing its premature polymerization, and by directing it to the export apparatus. This Escherichia coli O157:H7 protein is Flagellar protein FliT.